The primary structure comprises 452 residues: UDP-N-acetylmuramate--L-alanine ligase (452 aa).

119–125 provides a ligand contact to ATP; sequence GAHGKTS.

The protein belongs to the MurCDEF family.

The protein localises to the cytoplasm. The enzyme catalyses UDP-N-acetyl-alpha-D-muramate + L-alanine + ATP = UDP-N-acetyl-alpha-D-muramoyl-L-alanine + ADP + phosphate + H(+). It participates in cell wall biogenesis; peptidoglycan biosynthesis. In terms of biological role, cell wall formation. The polypeptide is UDP-N-acetylmuramate--L-alanine ligase (Streptococcus mutans serotype c (strain ATCC 700610 / UA159)).